The following is a 314-amino-acid chain: Methionyl-tRNA formyltransferase (314 aa).

113–116 (SLLP) lines the (6S)-5,6,7,8-tetrahydrofolate pocket.

The protein belongs to the Fmt family.

The enzyme catalyses L-methionyl-tRNA(fMet) + (6R)-10-formyltetrahydrofolate = N-formyl-L-methionyl-tRNA(fMet) + (6S)-5,6,7,8-tetrahydrofolate + H(+). Its function is as follows. Attaches a formyl group to the free amino group of methionyl-tRNA(fMet). The formyl group appears to play a dual role in the initiator identity of N-formylmethionyl-tRNA by promoting its recognition by IF2 and preventing the misappropriation of this tRNA by the elongation apparatus. This Pseudomonas aeruginosa (strain LESB58) protein is Methionyl-tRNA formyltransferase.